The following is a 396-amino-acid chain: Probable sugar efflux transporter (396 aa).

The next 12 membrane-spanning stretches (helical) occupy residues 15 to 35 (VVTL…PVGL), 50 to 70 (VGIM…PFML), 81 to 101 (LICL…AWNF), 103 to 123 (VLVI…SITA), 136 to 156 (AQAL…GLPI), 169 to 189 (TFFA…KLLP), 202 to 222 (LPLL…VVVV), 246 to 266 (FATV…LVFG), 275 to 295 (SLVS…LPAA), 301 to 321 (LAIL…GMQV), 333 to 353 (VAMA…ALVG), and 364 to 384 (AIGY…VLIF).

It belongs to the major facilitator superfamily. SotB (TC 2.A.1.2) family.

Its subcellular location is the cell inner membrane. Involved in the efflux of sugars. The physiological role may be the reduction of the intracellular concentration of toxic sugars or sugar metabolites. The sequence is that of Probable sugar efflux transporter from Salmonella paratyphi A (strain ATCC 9150 / SARB42).